Consider the following 99-residue polypeptide: Small ribosomal subunit protein bS16 (99 aa).

Positions 80–99 are disordered; it reads PPRQQNEAKRETAETAQPEA.

The protein belongs to the bacterial ribosomal protein bS16 family.

The chain is Small ribosomal subunit protein bS16 from Thermomicrobium roseum (strain ATCC 27502 / DSM 5159 / P-2).